The sequence spans 441 residues: UBX domain-containing protein 6 (441 aa).

Residues 1-10 form a mediates interaction with LMAN1 region; it reads MKKFFQEFKA. The residue at position 2 (lysine 2) is an N-acetylalanine. Disordered regions lie at residues 13-79 and 87-106; these read KFKS…QDTI and LQAE…NVVS. The segment covering 22 to 36 has biased composition (basic and acidic residues); sequence KLKESVGEKAHKEKP. The interval 51–63 is VCP/p97-interacting motif (VIM); sequence EAQMAAAAALARL. Over residues 52-61 the composition is skewed to low complexity; sequence AQMAAAAALA. Serine 96 carries the post-translational modification Phosphoserine. Positions 175–244 constitute a PUB domain; it reads VDTIAKYLDN…DPEEFYVLSE (70 aa). The UBX domain occupies 332–408; sequence RKYNYTLLRV…GLVPSALLTF (77 aa).

In terms of assembly, interacts with VCP through the PUB domain (via C-terminus) and VIM motif (via N-terminus); the interaction is direct. Forms a ternary complex with CAV1 and VCP. Interacts with SYVN1. Interacts with HERPUD1. Interacts with VCPKMT. May interact with DERL1. Interacts with PLAA, VCP and YOD1; may form a complex involved in macroautophagy. Interacts with LMAN1. In terms of tissue distribution, enhanced expression in testis.

Its subcellular location is the cytoplasm. The protein resides in the cytosol. It is found in the membrane. It localises to the nucleus. The protein localises to the cytoskeleton. Its subcellular location is the microtubule organizing center. The protein resides in the centrosome. It is found in the early endosome membrane. It localises to the late endosome membrane. The protein localises to the lysosome membrane. Its function is as follows. May negatively regulate the ATPase activity of VCP, an ATP-driven segregase that associates with different cofactors to control a wide variety of cellular processes. As a cofactor of VCP, it may play a role in the transport of CAV1 to lysosomes for degradation. It may also play a role in endoplasmic reticulum-associated degradation (ERAD) of misfolded proteins. Together with VCP and other cofactors, it may play a role in macroautophagy, regulating for instance the clearance of damaged lysosomes. The polypeptide is UBX domain-containing protein 6 (Homo sapiens (Human)).